The chain runs to 521 residues: MSDSFDAAASHFHARSSVNDSSFHLSRQEEAELLEGALHAPYPEELLFDDDEYTAKTQYDGPRYAMPTMFYPNKPTPGWPLNYVFGNERSRFEKILSNFVLRNLMLQVLAPCFVLLWCAVPMPRYEDSQGTVRIRFWFFLIFYYGIYNAVGLLWITKLFHIYSVNWCPSKLGGTITYILFWMFSLLVGSLVVYFTAWRQITFTWITLMFISMIIPIGISFSKLWKKHSRRTAQFLTQLALLEPEVRSNAVLETIGWKDAYAHYSWFIVVLLVTLLVYIVGEYLTNLYMSTLPHSSTVAIMYVYSWTGTVSLCNLVSSWILNTKTHSYALVTVFKLYFELTLQVYVRNLYARLESPQQFVLVQIASSLTMMSVIPLITMSRTVFRLNVLMTKSMDSYVVYRKNMGRNFYVKCVASNVSMLSFLGWSLILHFGSNAPLYPYFSFSKEEPYSFKLTFYASTAVWISEMVASYLTRLIMRKFYDFEVALEAIRDFVEYPDMIPTFIAVSIHVLQNVVFSIISLHF.

The next 10 membrane-spanning stretches (helical) occupy residues 103–123, 136–156, 177–197, 200–220, 259–279, 299–319, 327–346, 358–378, 411–431, and 450–470; these read NLMLQVLAPCFVLLWCAVPMP, FWFFLIFYYGIYNAVGLLWIT, YILFWMFSLLVGSLVVYFTAW, ITFTWITLMFISMIIPIGISF, AYAHYSWFIVVLLVTLLVYIV, IMYVYSWTGTVSLCNLVSSWI, YALVTVFKLYFELTLQVYVR, FVLVQIASSLTMMSVIPLITM, CVASNVSMLSFLGWSLILHFG, and FKLTFYASTAVWISEMVASYL.

It localises to the membrane. This is an uncharacterized protein from Schizosaccharomyces pombe (strain 972 / ATCC 24843) (Fission yeast).